A 202-amino-acid polypeptide reads, in one-letter code: Odorant-binding protein 59a (202 aa).

Positions 1–20 (MKQLIFLLICLSCGTCSIYA) are cleaved as a signal peptide. Basic and acidic residues predominate over residues 43–53 (HRQDEDEDRGR). A disordered region spans residues 43–105 (HRQDEDEDRG…QSDGRNHTSN (63 aa)). Residues 54-65 (GGQGRQGNGYEY) are compositionally biased toward gly residues.

It belongs to the PBP/GOBP family. Expressed in non-neuronal cells in hygrosensitive sensilla in the second chamber of the sacculus of the antenna third segment (at protein level).

It localises to the secreted. Odorant-binding protein required for hygrotaxis behavior in humidity-detecting sensilla. This Drosophila melanogaster (Fruit fly) protein is Odorant-binding protein 59a.